A 449-amino-acid polypeptide reads, in one-letter code: Glucose-6-phosphate isomerase (449 aa).

A Phosphothreonine modification is found at Thr38. Glu290 acts as the Proton donor in catalysis. Residues His311 and Lys425 contribute to the active site.

The protein belongs to the GPI family.

It is found in the cytoplasm. The catalysed reaction is alpha-D-glucose 6-phosphate = beta-D-fructose 6-phosphate. It functions in the pathway carbohydrate biosynthesis; gluconeogenesis. It participates in carbohydrate degradation; glycolysis; D-glyceraldehyde 3-phosphate and glycerone phosphate from D-glucose: step 2/4. Its function is as follows. Catalyzes the reversible isomerization of glucose-6-phosphate to fructose-6-phosphate. The polypeptide is Glucose-6-phosphate isomerase (Geobacillus thermodenitrificans (strain NG80-2)).